The primary structure comprises 275 residues: Phosphonoacetaldehyde hydrolase (275 aa).

The Nucleophile role is filled by D15. 2 residues coordinate Mg(2+): D15 and A17. K56 serves as the catalytic Schiff-base intermediate with substrate. Mg(2+) is bound at residue D189.

The protein belongs to the HAD-like hydrolase superfamily. PhnX family. Homodimer. Mg(2+) serves as cofactor.

The catalysed reaction is phosphonoacetaldehyde + H2O = acetaldehyde + phosphate + H(+). Involved in phosphonate degradation. The sequence is that of Phosphonoacetaldehyde hydrolase from Pseudomonas putida (strain W619).